The following is a 2873-amino-acid chain: Fibrillin-1 (2873 aa).

The N-terminal stretch at Met-1 to Gly-24 is a signal peptide. A propeptide spanning residues Ala-25–Arg-44 is cleaved from the precursor. The tract at residues Arg-45–Ile-81 is fibrillin unique N-terminal (FUN) domain. The interval Arg-45–Thr-452 is N-terminal domain. Intrachain disulfides connect Cys-59–Cys-68, Cys-67–Cys-80, Cys-85–Cys-94, Cys-89–Cys-100, Cys-102–Cys-111, Cys-119–Cys-129, Cys-123–Cys-134, Cys-136–Cys-145, Cys-150–Cys-160, Cys-154–Cys-166, and Cys-168–Cys-177. EGF-like domains follow at residues Ile-81 to Gly-112, Ser-115 to Gly-146, and Gln-147 to Glu-178. Residues Cys-119 to Val-329 form an interaction with MFAP4 region. The TB 1 domain maps to Gly-184–Ile-236. Residues Cys-195–Cys-221 are hybrid domain 1. The region spanning Asp-246–Glu-287 is the EGF-like 4; calcium-binding domain. Intrachain disulfides connect Cys-250-Cys-262, Cys-257-Cys-271, Cys-273-Cys-286, Cys-292-Cys-304, Cys-299-Cys-313, and Cys-315-Cys-328. An O-linked (Glc) serine glycan is attached at Ser-268. Residues Asp-288 to Val-329 form the EGF-like 5; calcium-binding domain. The 56-residue stretch at Gly-334–Cys-389 folds into the TB 2 domain. Asn-450 is a glycosylation site (N-linked (GlcNAc...) asparagine). Positions Val-451–Ile-491 constitute an EGF-like 6 domain. 15 disulfides stabilise this stretch: Cys-455/Cys-467, Cys-462/Cys-476, Cys-478/Cys-490, Cys-496/Cys-506, Cys-501/Cys-515, Cys-517/Cys-530, Cys-536/Cys-548, Cys-543/Cys-557, Cys-559/Cys-572, Cys-578/Cys-589, Cys-584/Cys-598, Cys-600/Cys-613, Cys-619/Cys-630, Cys-625/Cys-639, and Cys-641/Cys-654. A glycan (O-linked (Glc) serine) is linked at Ser-473. The EGF-like 7; calcium-binding domain occupies Asp-492–Arg-531. Ser-512 is a glycosylation site (O-linked (Glc) serine). In terms of domain architecture, EGF-like 8; calcium-binding spans Asp-532–Glu-573. Residues Asp-574–Lys-614 enclose the EGF-like 9; calcium-binding domain. Residues Asp-615–Val-655 enclose the EGF-like 10; calcium-binding domain. The TB 3 domain maps to Ser-661 to Cys-713. The region spanning Asp-725–Val-766 is the EGF-like 11; calcium-binding domain. Disulfide bonds link Cys-729-Cys-741, Cys-736-Cys-750, Cys-752-Cys-765, Cys-771-Cys-783, Cys-778-Cys-792, Cys-794-Cys-807, Cys-813-Cys-823, Cys-818-Cys-832, Cys-834-Cys-847, Cys-855-Cys-877, Cys-864-Cys-889, Cys-878-Cys-892, Cys-898-Cys-910, Cys-916-Cys-928, Cys-923-Cys-937, and Cys-939-Cys-952. An EGF-like 12; calcium-binding domain is found at Asp-767–Glu-808. The EGF-like 13; calcium-binding domain maps to Asp-809 to Ile-848. The region spanning Gly-853–Arg-904 is the TB 4 domain. Positions Gly-862–Ser-887 are hybrid domain 2. The EGF-like 14; calcium-binding domain maps to Asp-912–Leu-953. Residues Glu-958–Cys-1010 enclose the TB 5 domain. One can recognise an EGF-like 15; calcium-binding domain in the interval Asp-1030–Thr-1071. 46 cysteine pairs are disulfide-bonded: Cys-1034–Cys-1046, Cys-1041–Cys-1055, Cys-1057–Cys-1070, Cys-1076–Cys-1088, Cys-1083–Cys-1097, Cys-1099–Cys-1113, Cys-1119–Cys-1131, Cys-1126–Cys-1140, Cys-1142–Cys-1155, Cys-1161–Cys-1173, Cys-1168–Cys-1182, Cys-1184–Cys-1197, Cys-1203–Cys-1214, Cys-1210–Cys-1223, Cys-1225–Cys-1238, Cys-1244–Cys-1256, Cys-1251–Cys-1265, Cys-1267–Cys-1280, Cys-1286–Cys-1298, Cys-1293–Cys-1307, Cys-1309–Cys-1322, Cys-1328–Cys-1341, Cys-1335–Cys-1350, Cys-1352–Cys-1363, Cys-1369–Cys-1382, Cys-1376–Cys-1391, Cys-1393–Cys-1404, Cys-1410–Cys-1422, Cys-1417–Cys-1431, Cys-1433–Cys-1446, Cys-1452–Cys-1463, Cys-1458–Cys-1472, Cys-1474–Cys-1487, Cys-1493–Cys-1504, Cys-1499–Cys-1513, Cys-1515–Cys-1528, Cys-1536–Cys-1564, Cys-1551–Cys-1576, Cys-1565–Cys-1579, Cys-1566–Cys-1591, Cys-1612–Cys-1624, Cys-1619–Cys-1633, Cys-1635–Cys-1648, Cys-1654–Cys-1665, Cys-1660–Cys-1674, and Cys-1676–Cys-1689. Residue Asn-1069 is glycosylated (N-linked (GlcNAc...) asparagine). Residues Asp-1072 to Met-1114 enclose the EGF-like 16; calcium-binding domain. In terms of domain architecture, EGF-like 17; calcium-binding spans Asp-1115–Ile-1156. O-linked (Glc) serine glycosylation is present at Ser-1137. Asn-1151 is a glycosylation site (N-linked (GlcNAc...) asparagine). The region spanning Asp-1157–Val-1198 is the EGF-like 18; calcium-binding domain. Residues Asp-1199 to Thr-1239 form the EGF-like 19; calcium-binding domain. O-linked (Glc) serine glycosylation is present at Ser-1220. An EGF-like 20; calcium-binding domain is found at Asp-1240 to Val-1281. The 42-residue stretch at Asp-1282–Thr-1323 folds into the EGF-like 21; calcium-binding domain. O-linked (Glc) serine glycosylation is present at Ser-1304. Residues Asp-1324–Thr-1364 form the EGF-like 22; calcium-binding domain. Ser-1347 is a glycosylation site (O-linked (Glc) serine). The EGF-like 23; calcium-binding domain maps to Asp-1365–Thr-1405. An N-linked (GlcNAc...) asparagine glycan is attached at Asn-1371. A glycan (O-linked (Glc) serine) is linked at Ser-1388. The 42-residue stretch at Asp-1406–Glu-1447 folds into the EGF-like 24; calcium-binding domain. The EGF-like 25; calcium-binding domain maps to Asp-1448–Thr-1488. N-linked (GlcNAc...) asparagine glycosylation occurs at Asn-1486. The EGF-like 26; calcium-binding domain occupies Asp-1489–Val-1529. Ser-1510 carries O-linked (Glc) serine glycosylation. Residues Asp-1530–Arg-2733 form a C-terminal domain region. Residues Gly-1534 to Cys-1591 form the TB 6 domain. The short motif at Arg-1543 to Asp-1545 is the Cell attachment site element. Asn-1583 is a glycosylation site (N-linked (GlcNAc...) asparagine). An EGF-like 27; calcium-binding domain is found at Asp-1608–Asp-1649. Ser-1630 carries O-linked (Glc) serine glycosylation. An EGF-like 28; calcium-binding domain is found at Asp-1650–Met-1690. Residue Asn-1671 is glycosylated (N-linked (GlcNAc...) asparagine). The TB 7 domain occupies Ser-1695–Cys-1750. 2 N-linked (GlcNAc...) asparagine glycosylation sites follow: Asn-1705 and Asn-1715. One can recognise an EGF-like 29; calcium-binding domain in the interval Asp-1768 to Glu-1809. 40 cysteine pairs are disulfide-bonded: Cys-1772–Cys-1784, Cys-1779–Cys-1793, Cys-1795–Cys-1808, Cys-1814–Cys-1826, Cys-1820–Cys-1835, Cys-1837–Cys-1849, Cys-1855–Cys-1867, Cys-1862–Cys-1876, Cys-1878–Cys-1891, Cys-1897–Cys-1907, Cys-1902–Cys-1916, Cys-1918–Cys-1930, Cys-1936–Cys-1949, Cys-1944–Cys-1958, Cys-1960–Cys-1973, Cys-1979–Cys-1991, Cys-1986–Cys-2000, Cys-2002–Cys-2013, Cys-2019–Cys-2031, Cys-2026–Cys-2040, Cys-2042–Cys-2055, Cys-2063–Cys-2085, Cys-2072–Cys-2098, Cys-2086–Cys-2101, Cys-2087–Cys-2113, Cys-2133–Cys-2144, Cys-2139–Cys-2153, Cys-2155–Cys-2166, Cys-2172–Cys-2183, Cys-2178–Cys-2192, Cys-2194–Cys-2206, Cys-2212–Cys-2223, Cys-2219–Cys-2232, Cys-2234–Cys-2247, Cys-2253–Cys-2267, Cys-2260–Cys-2276, Cys-2278–Cys-2291, Cys-2297–Cys-2309, Cys-2304–Cys-2318, and Cys-2320–Cys-2333. The 41-residue stretch at Asp-1810–Asn-1850 folds into the EGF-like 30; calcium-binding domain. O-linked (Glc) serine glycosylation occurs at Ser-1832. In terms of domain architecture, EGF-like 31; calcium-binding spans Asp-1851 to Leu-1892. The O-linked (Glc) serine glycan is linked to Ser-1873. In terms of domain architecture, EGF-like 32; calcium-binding spans Asp-1893–Ile-1931. N-linked (GlcNAc...) asparagine glycosylation occurs at Asn-1904. Ser-1913 carries an O-linked (Glc) serine glycan. In terms of domain architecture, EGF-like 33; calcium-binding spans Asp-1932–Val-1974. An O-linked (Glc) serine glycan is attached at Ser-1955. Residues Asp-1975–Glu-2014 form the EGF-like 34; calcium-binding domain. The 42-residue stretch at Asp-2015–Gln-2056 folds into the EGF-like 35; calcium-binding domain. The O-linked (Glc) serine glycan is linked to Ser-2037. One can recognise a TB 8 domain in the interval Ser-2061 to Cys-2113. N-linked (GlcNAc...) asparagine glycosylation is present at Asn-2079. The EGF-like 36; calcium-binding domain maps to Asp-2129–Val-2167. A glycan (O-linked (Glc) serine) is linked at Ser-2150. The 40-residue stretch at Asp-2168–Glu-2207 folds into the EGF-like 37; calcium-binding domain. Asn-2180 carries N-linked (GlcNAc...) asparagine glycosylation. The 41-residue stretch at Asp-2208 to Lys-2248 folds into the EGF-like 38; calcium-binding domain. O-linked (Glc) serine glycosylation is present at Ser-2229. The region spanning Asp-2249–Ile-2292 is the EGF-like 39; calcium-binding domain. An EGF-like 40; calcium-binding domain is found at Asp-2293–Leu-2334. Residue Ser-2315 is glycosylated (O-linked (Glc) serine). Positions Gly-2339–Cys-2392 constitute a TB 9 domain. The EGF-like 41; calcium-binding domain occupies Asp-2404–Val-2445. Disulfide bonds link Cys-2408–Cys-2420, Cys-2415–Cys-2429, Cys-2431–Cys-2444, Cys-2450–Cys-2461, Cys-2457–Cys-2470, Cys-2472–Cys-2485, Cys-2491–Cys-2502, Cys-2498–Cys-2511, Cys-2513–Cys-2524, Cys-2530–Cys-2543, Cys-2537–Cys-2552, Cys-2554–Cys-2567, Cys-2573–Cys-2583, Cys-2579–Cys-2592, Cys-2594–Cys-2607, Cys-2613–Cys-2624, Cys-2619–Cys-2633, Cys-2635–Cys-2648, Cys-2654–Cys-2665, Cys-2661–Cys-2674, and Cys-2676–Cys-2688. The 41-residue stretch at Asp-2446–Lys-2486 folds into the EGF-like 42; calcium-binding domain. O-linked (Glc) serine glycosylation occurs at Ser-2467. Residues Asp-2487–Ile-2525 form the EGF-like 43; calcium-binding domain. Residues Asp-2526–Glu-2568 enclose the EGF-like 44; calcium-binding domain. Ser-2549 is a glycosylation site (O-linked (Glc) serine). The EGF-like 45; calcium-binding domain occupies Asp-2569–Val-2608. The EGF-like 46; calcium-binding domain maps to Asp-2609–Gln-2649. A glycan (O-linked (Glc) serine) is linked at Ser-2630. One can recognise an EGF-like 47; calcium-binding domain in the interval Asp-2650 to Val-2689. Ser-2704, Ser-2705, and Ser-2711 each carry phosphoserine. Residues Arg-2728 to Ser-2747 are disordered. Asn-2736, Asn-2752, and Asn-2769 each carry an N-linked (GlcNAc...) asparagine glycan.

Belongs to the fibrillin family. In terms of assembly, interacts with COL16A1. Interacts with integrin alpha-V/beta-3. Interacts with ADAMTS10; this interaction promotes microfibril assembly. Interacts with THSD4; this interaction promotes fibril formation. Interacts (via N-terminal domain) with FBLN2 and FBLN5. Interacts with ELN. Forms a ternary complex with ELN and FBLN2 or FBLN5 and a significant interaction with ELN seen only in the presence of FBLN2 or FBLN5. Interacts (via N-terminal domain) with LTBP2 (via C-terminal domain) in a Ca(+2)-dependent manner. Interacts (via N-terminal domain) with LTBP1 (via C-terminal domain). Interacts with integrins ITGA5:ITGB1, ITGAV:ITGB3 and ITGAV:ITGB6. Interacts (via N-terminal domain) with BMP2, BMP4, BMP7, BMP10 and GDF5. Interacts (via N-terminal domain) with MFAP2 and MFAP5. Interacts with ADAMTSL5. Interacts with MFAP4. Interacts (via N-terminal domain) with TNFSF11 in a Ca(+2)-dependent manner. Interacts (via N-terminal domain) with EFEMP2; this interaction inhibits EFEMP2 binding to LOX and ELN. Cleavage of N- and C-terminus by furin is required for incorporation into the extracellular matrix and assembly into microfibrils. The C-terminus, which corresponds to the Asprosin chain, was initially thought to constitute a propeptide. Fibrillin-1 and Asprosin chains are still linked together during the secretion from cells, but are subsequently separated by furin, an essential step for incorporation of Fibrillin-1 into the nascent microfibrils. Post-translationally, forms intermolecular disulfide bonds either with other fibrillin-1 molecules or with other components of the microfibrils. In terms of processing, O-glycosylated on serine residues by POGLUT2 and POGLUT3 which is necessary for efficient protein secretion. Strongly expressed during the first week of osteoblast differentiation. In terms of tissue distribution, secreted by white adipose tissue (at protein level).

Its subcellular location is the secreted. The protein resides in the extracellular space. The protein localises to the extracellular matrix. Its function is as follows. Structural component of the 10-12 nm diameter microfibrils of the extracellular matrix, which conveys both structural and regulatory properties to load-bearing connective tissues. Fibrillin-1-containing microfibrils provide long-term force bearing structural support. In tissues such as the lung, blood vessels and skin, microfibrils form the periphery of the elastic fiber, acting as a scaffold for the deposition of elastin. In addition, microfibrils can occur as elastin-independent networks in tissues such as the ciliary zonule, tendon, cornea and glomerulus where they provide tensile strength and have anchoring roles. Fibrillin-1 also plays a key role in tissue homeostasis through specific interactions with growth factors, such as the bone morphogenetic proteins (BMPs), growth and differentiation factors (GDFs) and latent transforming growth factor-beta-binding proteins (LTBPs), cell-surface integrins and other extracellular matrix protein and proteoglycan components. Regulates osteoblast maturation by controlling TGF-beta bioavailability and calibrating TGF-beta and BMP levels, respectively. Negatively regulates osteoclastogenesis by binding and sequestering an osteoclast differentiation and activation factor TNFSF11. This leads to disruption of TNFSF11-induced Ca(2+) signaling and impairment of TNFSF11-mediated nuclear translocation and activation of transcription factor NFATC1 which regulates genes important for osteoclast differentiation and function. Mediates cell adhesion via its binding to cell surface receptors integrins ITGAV:ITGB3 and ITGA5:ITGB1. Binds heparin and this interaction plays an important role in the assembly of microfibrils. Functionally, adipokine secreted by white adipose tissue that plays an important regulatory role in the glucose metabolism of liver, muscle and pancreas. Hormone that targets the liver in response to fasting to increase plasma glucose levels. Binds the olfactory receptor Olfr734 at the surface of hepatocytes and promotes hepatocyte glucose release by activating the protein kinase A activity in the liver, resulting in rapid glucose release into the circulation. May act as a regulator of adaptive thermogenesis by inhibiting browning and energy consumption, while increasing lipid deposition in white adipose tissue. Also acts as an orexigenic hormone that increases appetite: crosses the blood brain barrier and exerts effects on the hypothalamus. In the arcuate nucleus of the hypothalamus, asprosin directly activates orexigenic AgRP neurons and indirectly inhibits anorexigenic POMC neurons, resulting in appetite stimulation. Activates orexigenic AgRP neurons via binding to the olfactory receptor Olfr734. May also play a role in sperm motility in testis via interaction with Olfr734 receptor. The polypeptide is Fibrillin-1 (Mus musculus (Mouse)).